The chain runs to 391 residues: Period circadian protein (391 aa).

4 disordered regions span residues 27–121 (VTAP…PPVT), 163–188 (MLEYSGPGPGHGHGIKRGGSHSWEGE), 241–270 (GSSAGGNGSGTGNNNGNGNNNQPTTNQFTQ), and 328–357 (SPSGTSPNPNRPHKHAHVHSSSEKPSTSQA). The span at 93 to 114 (GTSGTGNSGDGGGGGGADGPGS) shows a compositional bias: gly residues. Gly residues predominate over residues 241–255 (GSSAGGNGSGTGNNN).

As to quaternary structure, forms a heterodimer with timeless (TIM); the complex then translocates into the nucleus. In terms of processing, phosphorylated with a circadian rhythmicity, probably by the double-time protein (dbt). Phosphorylation could be implicated in the stability of per monomer and in the formation of heterodimer per-tim.

The protein localises to the nucleus. It is found in the cytoplasm. The protein resides in the perinuclear region. Essential for biological clock functions. Determines the period length of circadian and ultradian rhythms; an increase in PER dosage leads to shortened circadian rhythms and a decrease leads to lengthened circadian rhythms. Essential for the circadian rhythmicity of locomotor activity, eclosion behavior, and for the rhythmic component of the male courtship song that originates in the thoracic nervous system. The biological cycle depends on the rhythmic formation and nuclear localization of the TIM-PER complex. Light induces the degradation of TIM, which promotes elimination of PER. Nuclear activity of the heterodimer coordinatively regulates PER and TIM transcription through a negative feedback loop. Behaves as a negative element in circadian transcriptional loop. Does not appear to bind DNA, suggesting indirect transcriptional inhibition. This Drosophila insularis (Fruit fly) protein is Period circadian protein (per).